The chain runs to 805 residues: Pentatricopeptide repeat-containing protein At4g01570 (805 aa).

PPR repeat units follow at residues 91-125 (SATA…GVNL), 126-160 (DQTM…GDCL), 161-196 (NPSV…DNHS), 211-241 (GTVA…LKGM), 247-277 (DTWS…MKER), 288-322 (DICT…GHEP), 323-357 (DNST…GFVP), 358-392 (DTIV…GVRA), 393-427 (SCWT…GQFV), 428-462 (DAIT…GFSV), 463-497 (DLVT…NLVP), 593-627 (DVDM…GVTD), 629-663 (TSYT…FCAA), 664-698 (DIAT…GGYL), 699-733 (DIVM…GINP), and 734-768 (DVVS…GCLP).

Belongs to the PPR family. P subfamily.

In Arabidopsis thaliana (Mouse-ear cress), this protein is Pentatricopeptide repeat-containing protein At4g01570.